The sequence spans 360 residues: Hereditary hemochromatosis protein homolog (360 aa).

Residues Met-1–Pro-25 form the signal peptide. Positions Gln-26–Glu-127 are alpha-1. Topologically, residues Gln-26–Ile-319 are extracellular. N-linked (GlcNAc...) asparagine glycans are attached at residues Asn-115, Asn-143, Asn-167, and Asn-247. The tract at residues Ser-128–Gln-218 is alpha-2. Intrachain disulfides connect Cys-137/Cys-200 and Cys-238/Cys-295. Residues Val-219–Trp-310 form an alpha-3 region. One can recognise an Ig-like C1-type domain in the interval Pro-220–Thr-309. Residues Glu-311–Ile-319 form a connecting peptide region. The helical transmembrane segment at Ile-320–Val-340 threads the bilayer. At Leu-341–Glu-360 the chain is on the cytoplasmic side.

The protein belongs to the MHC class I family. In terms of assembly, binds TFR through the extracellular domain in a pH-dependent manner.

The protein localises to the cell membrane. Its function is as follows. Binds to transferrin receptor (TFR) and reduces its affinity for iron-loaded transferrin. This Rattus norvegicus (Rat) protein is Hereditary hemochromatosis protein homolog (Hfe).